Consider the following 356-residue polypeptide: Decorin (356 aa).

An N-terminal signal peptide occupies residues 1-15 (MRLVLFILLLPVCLA). Residues 16 to 29 (TPFHQKGLFDFMLE) constitute a propeptide that is removed on maturation. Residue Ser45 is glycosylated (O-linked (Xyl...) (glycosaminoglycan) serine). Disulfide bonds link Cys51–Cys57 and Cys55–Cys64. LRR repeat units lie at residues 70–90 (ERVP…NNKI), 91–114 (TEIR…NNKI), 115–138 (SKIS…KNNL), 139–159 (KELP…ENEI), 160–183 (SKLR…TNPL), 184–209 (KSSG…DTNI), 210–230 (TSIP…GNKI), 231–254 (SKID…FNSI), 255–278 (SSVE…NNEL), 279–301 (VRVP…NNKI), 302–331 (ASIG…SNPV), and 332–356 (QYWE…GNYK). Asn208 carries an N-linked (GlcNAc...) asparagine glycan. N-linked (GlcNAc...) asparagine glycosylation is present at Asn259. Cys310 and Cys343 form a disulfide bridge.

Belongs to the small leucine-rich proteoglycan (SLRP) family. SLRP class I subfamily. In terms of assembly, binds to type I and type II collagen, to fibronectin and TGF-beta. Forms a ternary complex with MFAP2 and ELN. The attached glycosaminoglycan chain can be either chondroitin sulfate or dermatan sulfate depending upon the tissue of origin.

It localises to the secreted. Its subcellular location is the extracellular space. It is found in the extracellular matrix. In terms of biological role, may affect the rate of fibrils formation. The polypeptide is Decorin (DCN) (Coturnix japonica (Japanese quail)).